We begin with the raw amino-acid sequence, 480 residues long: 6-phosphogluconate dehydrogenase, decarboxylating (480 aa).

Residues 11–16, 34–36, 76–78, and Asn-104 each bind NADP(+); these read GLAVMG, NRS, and IKA. Substrate is bound by residues Asn-104 and 130-132; that span reads SGG. The active-site Proton acceptor is Lys-184. 187–188 is a binding site for substrate; that stretch reads HN. The active-site Proton donor is Glu-191. 5 residues coordinate substrate: Tyr-192, Lys-261, Arg-288, Arg-448, and His-454.

Belongs to the 6-phosphogluconate dehydrogenase family. As to quaternary structure, homodimer.

The enzyme catalyses 6-phospho-D-gluconate + NADP(+) = D-ribulose 5-phosphate + CO2 + NADPH. The protein operates within carbohydrate degradation; pentose phosphate pathway; D-ribulose 5-phosphate from D-glucose 6-phosphate (oxidative stage): step 3/3. In terms of biological role, catalyzes the oxidative decarboxylation of 6-phosphogluconate to ribulose 5-phosphate and CO(2), with concomitant reduction of NADP to NADPH. The chain is 6-phosphogluconate dehydrogenase, decarboxylating (gnd) from Chlamydia trachomatis serovar D (strain ATCC VR-885 / DSM 19411 / UW-3/Cx).